The following is a 365-amino-acid chain: 1-aminocyclopropane-1-carboxylate oxidase homolog 9 (365 aa).

Residues 214–313 (KGLLMLCHYY…RISVACFVSS (100 aa)) form the Fe2OG dioxygenase domain. Fe cation-binding residues include histidine 238, aspartate 240, and histidine 294. Arginine 304 serves as a coordination point for 2-oxoglutarate.

The protein belongs to the iron/ascorbate-dependent oxidoreductase family. Fe(2+) serves as cofactor.

The protein is 1-aminocyclopropane-1-carboxylate oxidase homolog 9 of Arabidopsis thaliana (Mouse-ear cress).